The chain runs to 451 residues: uncharacterized protein (451 aa).

Positions 2 to 60 constitute a TRAM domain; that stretch reads VVKVKQKIPLKIKRMGINGEGIGFYQKTLVFVPGALKGENIFCQITAVKRNFAEAKLLT. 4 residues coordinate [4Fe-4S] cluster: cysteine 73, cysteine 79, cysteine 82, and cysteine 162. Positions 283, 312, 333, and 381 each coordinate S-adenosyl-L-methionine. The active-site Nucleophile is the cysteine 408.

This sequence belongs to the class I-like SAM-binding methyltransferase superfamily. RNA M5U methyltransferase family.

This is an uncharacterized protein from Streptococcus pyogenes serotype M3 (strain ATCC BAA-595 / MGAS315).